Here is a 215-residue protein sequence, read N- to C-terminus: ATP phosphoribosyltransferase (215 aa).

It belongs to the ATP phosphoribosyltransferase family. Short subfamily. In terms of assembly, heteromultimer composed of HisG and HisZ subunits.

Its subcellular location is the cytoplasm. The enzyme catalyses 1-(5-phospho-beta-D-ribosyl)-ATP + diphosphate = 5-phospho-alpha-D-ribose 1-diphosphate + ATP. The protein operates within amino-acid biosynthesis; L-histidine biosynthesis; L-histidine from 5-phospho-alpha-D-ribose 1-diphosphate: step 1/9. Functionally, catalyzes the condensation of ATP and 5-phosphoribose 1-diphosphate to form N'-(5'-phosphoribosyl)-ATP (PR-ATP). Has a crucial role in the pathway because the rate of histidine biosynthesis seems to be controlled primarily by regulation of HisG enzymatic activity. In Gloeothece citriformis (strain PCC 7424) (Cyanothece sp. (strain PCC 7424)), this protein is ATP phosphoribosyltransferase.